Reading from the N-terminus, the 131-residue chain is MKIALIAHDKKKDDMVSFAYAYKPIFEQHELFATGTTGLRVMEATGLAVTRYQSGPLGGDQEIGAMIAKNALDMVIFFRDPLTAQPHEPDVNALLRLCDVYAIPLATNMASAEMLMHALNRGDLDYRKFRK.

One can recognise an MGS-like domain in the interval M1–K131. Residues H8, K12, T34 to T37, and S54 to G55 each bind substrate. Residue D60 is the Proton donor/acceptor of the active site. Position 87 (H87) interacts with substrate.

The protein belongs to the methylglyoxal synthase family.

It catalyses the reaction dihydroxyacetone phosphate = methylglyoxal + phosphate. Functionally, catalyzes the formation of methylglyoxal from dihydroxyacetone phosphate. The polypeptide is Methylglyoxal synthase (Bacillus cytotoxicus (strain DSM 22905 / CIP 110041 / 391-98 / NVH 391-98)).